The chain runs to 454 residues: Bifunctional protein GlmU (454 aa).

Residues 1–228 (MTLPLHVVIL…PQDVEGANDP (228 aa)) form a pyrophosphorylase region. UDP-N-acetyl-alpha-D-glucosamine contacts are provided by residues 10 to 13 (LAAG), Lys-24, Gln-76, 81 to 82 (GT), 103 to 105 (YGD), Gly-138, Glu-153, Asn-168, and Asn-226. Asp-105 is a binding site for Mg(2+). Asn-226 provides a ligand contact to Mg(2+). A linker region spans residues 229 to 249 (WQLAQLERAWQLRAARALCLQ). The N-acetyltransferase stretch occupies residues 250–454 (GVRMADPARV…IEGWERPKKK (205 aa)). UDP-N-acetyl-alpha-D-glucosamine is bound by residues Arg-332 and Lys-350. Residue His-362 is the Proton acceptor of the active site. Residues Tyr-365 and Asn-376 each contribute to the UDP-N-acetyl-alpha-D-glucosamine site. Residues Ala-379, 385 to 386 (NY), Ser-404, Ala-422, and Arg-439 contribute to the acetyl-CoA site.

In the N-terminal section; belongs to the N-acetylglucosamine-1-phosphate uridyltransferase family. The protein in the C-terminal section; belongs to the transferase hexapeptide repeat family. In terms of assembly, homotrimer. Mg(2+) is required as a cofactor.

Its subcellular location is the cytoplasm. It carries out the reaction alpha-D-glucosamine 1-phosphate + acetyl-CoA = N-acetyl-alpha-D-glucosamine 1-phosphate + CoA + H(+). The catalysed reaction is N-acetyl-alpha-D-glucosamine 1-phosphate + UTP + H(+) = UDP-N-acetyl-alpha-D-glucosamine + diphosphate. The protein operates within nucleotide-sugar biosynthesis; UDP-N-acetyl-alpha-D-glucosamine biosynthesis; N-acetyl-alpha-D-glucosamine 1-phosphate from alpha-D-glucosamine 6-phosphate (route II): step 2/2. It participates in nucleotide-sugar biosynthesis; UDP-N-acetyl-alpha-D-glucosamine biosynthesis; UDP-N-acetyl-alpha-D-glucosamine from N-acetyl-alpha-D-glucosamine 1-phosphate: step 1/1. It functions in the pathway bacterial outer membrane biogenesis; LPS lipid A biosynthesis. Catalyzes the last two sequential reactions in the de novo biosynthetic pathway for UDP-N-acetylglucosamine (UDP-GlcNAc). The C-terminal domain catalyzes the transfer of acetyl group from acetyl coenzyme A to glucosamine-1-phosphate (GlcN-1-P) to produce N-acetylglucosamine-1-phosphate (GlcNAc-1-P), which is converted into UDP-GlcNAc by the transfer of uridine 5-monophosphate (from uridine 5-triphosphate), a reaction catalyzed by the N-terminal domain. This Xanthomonas campestris pv. campestris (strain 8004) protein is Bifunctional protein GlmU.